We begin with the raw amino-acid sequence, 213 residues long: Ribonuclease HII (213 aa).

One can recognise an RNase H type-2 domain in the interval 1–213; sequence MKIIGIDEAG…SWKTAQKFIQ (213 aa). Residues aspartate 7, glutamate 8, and aspartate 105 each contribute to the a divalent metal cation site.

Belongs to the RNase HII family. It depends on Mn(2+) as a cofactor. Mg(2+) serves as cofactor.

The protein localises to the cytoplasm. It catalyses the reaction Endonucleolytic cleavage to 5'-phosphomonoester.. Endonuclease that specifically degrades the RNA of RNA-DNA hybrids. The polypeptide is Ribonuclease HII (Methanococcoides burtonii (strain DSM 6242 / NBRC 107633 / OCM 468 / ACE-M)).